The primary structure comprises 154 residues: UPF0178 protein GM21_2006 (154 aa).

Belongs to the UPF0178 family.

The protein is UPF0178 protein GM21_2006 of Geobacter sp. (strain M21).